A 301-amino-acid polypeptide reads, in one-letter code: Ribosomal RNA small subunit methyltransferase A (301 aa).

The S-adenosyl-L-methionine site is built by asparagine 23, isoleucine 25, glycine 50, glutamate 72, aspartate 97, and asparagine 149.

It belongs to the class I-like SAM-binding methyltransferase superfamily. rRNA adenine N(6)-methyltransferase family. RsmA subfamily.

It localises to the cytoplasm. The enzyme catalyses adenosine(1518)/adenosine(1519) in 16S rRNA + 4 S-adenosyl-L-methionine = N(6)-dimethyladenosine(1518)/N(6)-dimethyladenosine(1519) in 16S rRNA + 4 S-adenosyl-L-homocysteine + 4 H(+). Its function is as follows. Specifically dimethylates two adjacent adenosines (A1518 and A1519) in the loop of a conserved hairpin near the 3'-end of 16S rRNA in the 30S particle. May play a critical role in biogenesis of 30S subunits. This chain is Ribosomal RNA small subunit methyltransferase A, found in Rickettsia conorii (strain ATCC VR-613 / Malish 7).